Reading from the N-terminus, the 331-residue chain is Glyceraldehyde-3-phosphate dehydrogenase (331 aa).

Residues 10–11, aspartate 31, lysine 75, and threonine 117 contribute to the NAD(+) site; that span reads RI. D-glyceraldehyde 3-phosphate is bound by residues 148-150 and threonine 179; that span reads SCT. Cysteine 149 serves as the catalytic Nucleophile. Position 180 (asparagine 180) interacts with NAD(+). D-glyceraldehyde 3-phosphate is bound by residues arginine 194, 207–208, and arginine 230; that span reads TG. Position 311 (asparagine 311) interacts with NAD(+).

This sequence belongs to the glyceraldehyde-3-phosphate dehydrogenase family. As to quaternary structure, homotetramer.

It is found in the cytoplasm. The enzyme catalyses D-glyceraldehyde 3-phosphate + phosphate + NAD(+) = (2R)-3-phospho-glyceroyl phosphate + NADH + H(+). The protein operates within carbohydrate degradation; glycolysis; pyruvate from D-glyceraldehyde 3-phosphate: step 1/5. Catalyzes the oxidative phosphorylation of glyceraldehyde 3-phosphate (G3P) to 1,3-bisphosphoglycerate (BPG) using the cofactor NAD. The first reaction step involves the formation of a hemiacetal intermediate between G3P and a cysteine residue, and this hemiacetal intermediate is then oxidized to a thioester, with concomitant reduction of NAD to NADH. The reduced NADH is then exchanged with the second NAD, and the thioester is attacked by a nucleophilic inorganic phosphate to produce BPG. The chain is Glyceraldehyde-3-phosphate dehydrogenase (gap) from Thermus aquaticus.